Consider the following 191-residue polypeptide: FMN-dependent NADH:quinone oxidoreductase 1 (191 aa).

FMN contacts are provided by residues Ser-10 and 16 to 18 (SVS).

This sequence belongs to the azoreductase type 1 family. Homodimer. FMN is required as a cofactor.

The catalysed reaction is 2 a quinone + NADH + H(+) = 2 a 1,4-benzosemiquinone + NAD(+). It carries out the reaction N,N-dimethyl-1,4-phenylenediamine + anthranilate + 2 NAD(+) = 2-(4-dimethylaminophenyl)diazenylbenzoate + 2 NADH + 2 H(+). Functionally, quinone reductase that provides resistance to thiol-specific stress caused by electrophilic quinones. Also exhibits azoreductase activity. Catalyzes the reductive cleavage of the azo bond in aromatic azo compounds to the corresponding amines. This chain is FMN-dependent NADH:quinone oxidoreductase 1, found in Jannaschia sp. (strain CCS1).